The primary structure comprises 282 residues: DNA-dependent metalloprotease WSS1 homolog 2 (282 aa).

The Ubiquitin-like domain maps to 1 to 75; it reads MELKFSCRGN…CLIRQDKDIV (75 aa). The region spanning 99–274 is the WLM domain; it reads PHTTPKPASI…LLAAAERRKQ (176 aa). His202 contacts Zn(2+). Glu203 is a catalytic residue. Zn(2+) is bound by residues His206 and His212. The disordered stretch occupies residues 234–282; sequence GKPGSYVSDRASYTPQQDNDDEDQKNHRRDLLLAAAERRKQSGSKVQKE. A compositionally biased stretch (basic and acidic residues) spans 269–282; sequence AERRKQSGSKVQKE.

Belongs to the peptidase M3 family. WSS1-like metalloprotease (WLM) subfamily. Zn(2+) serves as cofactor.

Its subcellular location is the cytoplasm. The protein resides in the nucleus. In terms of biological role, metalloendopeptidase that acts selectively on DNA-binding proteins. DNA is needed to bring the protease and substrates together to enable proteolysis. Involved in the repair of toxic DNA-protein cross-links (DPCs) such as covalently trapped topoisomerase 1 (TOP1) adducts on DNA lesions or DPCs induced by reactive compounds such as formaldehyde. This chain is DNA-dependent metalloprotease WSS1 homolog 2, found in Schizosaccharomyces pombe (strain 972 / ATCC 24843) (Fission yeast).